A 95-amino-acid chain; its full sequence is Large ribosomal subunit protein uL23 (95 aa).

This sequence belongs to the universal ribosomal protein uL23 family. As to quaternary structure, part of the 50S ribosomal subunit. Contacts protein L29, and trigger factor when it is bound to the ribosome.

One of the early assembly proteins it binds 23S rRNA. One of the proteins that surrounds the polypeptide exit tunnel on the outside of the ribosome. Forms the main docking site for trigger factor binding to the ribosome. This Desulfitobacterium hafniense (strain Y51) protein is Large ribosomal subunit protein uL23.